The chain runs to 84 residues: Cell division topological specificity factor (84 aa).

Belongs to the MinE family.

In terms of biological role, prevents the cell division inhibition by proteins MinC and MinD at internal division sites while permitting inhibition at polar sites. This ensures cell division at the proper site by restricting the formation of a division septum at the midpoint of the long axis of the cell. This Burkholderia cenocepacia (strain ATCC BAA-245 / DSM 16553 / LMG 16656 / NCTC 13227 / J2315 / CF5610) (Burkholderia cepacia (strain J2315)) protein is Cell division topological specificity factor.